The chain runs to 572 residues: MTLEIPRRQYVSNYGPTVGDRVRLADTELIIEVEEDFTTYGEEIKFGGGKTIRDGMGQSPTATRANGALDLVITNALILDWWGIVKADVGIRDGYIVGIGKAGNPNIQAGVTPGMVVGPSTEVIAGENLILTAGGIDAHVHFICPQLCEFAIASGVTTLLGGGTGPATGSNATTCTPGAWNLGKMLQAAEGFPVNLGFFGKGNAAFPAALREQVEAGACGLKIHEDWGSTPAVIDSCLQVADEYDIQTLIHTDTLNESAFVEDTIAAINGRTIHTFHTEGAGGGHAPDIIRIASEPNVLPSSTNPTRPFTRNTIEEHLDMLMVCHHLSKNVPEDIAFAESRIRPQTIAAEDILHDMGVFSIISSDSQAMGRVGEVIIRTWQTAHKMKVQRGPLPQDSSRNDNFRAKRYVAKYTICPAIAQGLSHVIGSVEVGKLADLCLWKPAFFGVKPEIVLKGGLIAYAQMGDPNASIPTPQPVYPRPMFGSFGRALTETSLLFVSQAALDLGIPEKLGIQRRAVAVKNCREIGKADLKLNTATPHIEVNPETYEVRADGELLTCEPAEVLPMAQRYFLF.

The Urease domain maps to 134–572 (GGIDAHVHFI…LPMAQRYFLF (439 aa)). His139, His141, and Lys222 together coordinate Ni(2+). Lys222 carries the N6-carboxylysine modification. His224 lines the substrate pocket. Ni(2+)-binding residues include His251 and His277. His325 functions as the Proton donor in the catalytic mechanism. Residue Asp365 coordinates Ni(2+).

This sequence belongs to the metallo-dependent hydrolases superfamily. Urease alpha subunit family. In terms of assembly, heterotrimer of UreA (gamma), UreB (beta) and UreC (alpha) subunits. Three heterotrimers associate to form the active enzyme. Ni cation is required as a cofactor. Carboxylation allows a single lysine to coordinate two nickel ions.

Its subcellular location is the cytoplasm. It catalyses the reaction urea + 2 H2O + H(+) = hydrogencarbonate + 2 NH4(+). It functions in the pathway nitrogen metabolism; urea degradation; CO(2) and NH(3) from urea (urease route): step 1/1. The chain is Urease subunit alpha from Synechococcus sp. (strain JA-2-3B'a(2-13)) (Cyanobacteria bacterium Yellowstone B-Prime).